A 236-amino-acid polypeptide reads, in one-letter code: Putative lipoprotein MlpA (236 aa).

The N-terminal stretch at 1 to 21 (MTKNIVNTALVLVGAGSLLTG) is a signal peptide. A lipid anchor (N-palmitoyl cysteine) is attached at C22. A lipid anchor (S-diacylglycerol cysteine) is attached at C22.

It localises to the cell membrane. This is Putative lipoprotein MlpA (mlpA) from Myxococcus xanthus.